A 193-amino-acid chain; its full sequence is Segregation and condensation protein B (193 aa).

It belongs to the ScpB family. In terms of assembly, homodimer. Homodimerization may be required to stabilize the binding of ScpA to the Smc head domains. Component of a cohesin-like complex composed of ScpA, ScpB and the Smc homodimer, in which ScpA and ScpB bind to the head domain of Smc. The presence of the three proteins is required for the association of the complex with DNA.

Its subcellular location is the cytoplasm. In terms of biological role, participates in chromosomal partition during cell division. May act via the formation of a condensin-like complex containing Smc and ScpA that pull DNA away from mid-cell into both cell halves. This Clostridium botulinum (strain 657 / Type Ba4) protein is Segregation and condensation protein B.